The primary structure comprises 140 residues: Endoribonuclease YbeY (140 aa).

Positions 99, 103, and 109 each coordinate Zn(2+).

It belongs to the endoribonuclease YbeY family. Zn(2+) is required as a cofactor.

It localises to the cytoplasm. Single strand-specific metallo-endoribonuclease involved in late-stage 70S ribosome quality control and in maturation of the 3' terminus of the 16S rRNA. The chain is Endoribonuclease YbeY from Wolinella succinogenes (strain ATCC 29543 / DSM 1740 / CCUG 13145 / JCM 31913 / LMG 7466 / NCTC 11488 / FDC 602W) (Vibrio succinogenes).